Here is a 762-residue protein sequence, read N- to C-terminus: Dolichyl-phosphate-mannose--protein mannosyltransferase 4 (762 aa).

A compositionally biased stretch (basic residues) spans 1 to 10; that stretch reads MSVPKKRNHG. The disordered stretch occupies residues 1-24; the sequence is MSVPKKRNHGKLPPSTKDVDDPSL. Residues 1–53 are Lumenal-facing; that stretch reads MSVPKKRNHGKLPPSTKDVDDPSLKYTKAAPKCEQVAEHWLLQPLPEPESRYS. Residues 54–74 traverse the membrane as a helical segment; that stretch reads FWVTIVTLLAFAARFYKIWYP. Topologically, residues 75-136 are cytoplasmic; sequence KEVVFDEVHF…IGYSYETHPA (62 aa). Residues 137–157 traverse the membrane as a helical segment; that stretch reads PYIAYRSFNAILGTLTVPIMF. The Lumenal segment spans residues 158 to 166; that stretch reads NTLKELNFR. The chain crosses the membrane as a helical span at residues 167–187; that stretch reads AITCAFASLLVAIDTAHVTET. Topologically, residues 188-189 are cytoplasmic; it reads RL. A helical transmembrane segment spans residues 190–210; it reads ILLDAILIISIAATMYCYVRF. Residues 211–217 are Lumenal-facing; sequence YKCQLRQ. A helical transmembrane segment spans residues 218–238; it reads PFTWSWYIWLHATGLSLSFVI. The Cytoplasmic portion of the chain corresponds to 239–242; that stretch reads STKY. The helical transmembrane segment at 243-263 threads the bilayer; the sequence is VGVMTYSAIGFAAVVNLWQLL. Over 264–283 the chain is Lumenal; it reads DIKAGLSLRQFMRHFSKRLN. A helical transmembrane segment spans residues 284–304; the sequence is GLVLIPFVIYLFWFWVHFTVL. Residues 305–593 are Cytoplasmic-facing; the sequence is NTSGPGDAFM…NGDEKKQIYF (289 aa). 3 MIR domains span residues 331–391, 399–458, and 464–521; these read SKTV…VLPP, GQAV…FQPL, and GHVL…VDEI. Residues 594 to 614 form a helical membrane-spanning segment; sequence IGNIIGWWFQVISLAVFVGII. Residues 615–635 lie on the Lumenal side of the membrane; the sequence is VADLITRHRGYYALNKMTREK. Residues 636–656 form a helical membrane-spanning segment; sequence LYGPLMFFFVSWCCHYFPFFL. The Cytoplasmic portion of the chain corresponds to 657–716; sequence MARQKFLHHYLPAHLIACLFSGALWEVIFSDCKSLDLEKDEDISGASYERNPKVYVKPYT. The chain crosses the membrane as a helical span at residues 717–737; it reads VFLVCVSCAVAWFFVYFSPLV. The Lumenal segment spans residues 738–762; the sequence is YGDVSLSPSEVVSREWFDIELNFSK. A glycan (N-linked (GlcNAc...) asparagine) is linked at Asn-759.

Belongs to the glycosyltransferase 39 family. As to quaternary structure, forms a functional homodimer and may form a heterodimer with PMT6. Interacts with RCR1.

Its subcellular location is the endoplasmic reticulum membrane. The enzyme catalyses a di-trans,poly-cis-dolichyl beta-D-mannosyl phosphate + L-seryl-[protein] = 3-O-(alpha-D-mannosyl)-L-seryl-[protein] + a di-trans,poly-cis-dolichyl phosphate + H(+). It catalyses the reaction a di-trans,poly-cis-dolichyl beta-D-mannosyl phosphate + L-threonyl-[protein] = 3-O-(alpha-D-mannosyl)-L-threonyl-[protein] + a di-trans,poly-cis-dolichyl phosphate + H(+). The protein operates within protein modification; protein glycosylation. In terms of biological role, protein O-mannosyltransferase involved in O-glycosylation which is essential for cell wall rigidity. Forms a homodimeric complex to transfer mannose from Dol-P-mannose to Ser or Thr residues on proteins. Specifically acts on secretory proteins with an ER-luminally oriented Ser/Thr-rich region flanked by a membrane anchor such as FUS1, AXL2, GAS1, KEX2, MID2, WSC1, WSC2, OPY2, PRM5, RAX2, or YNL176. In Saccharomyces cerevisiae (strain ATCC 204508 / S288c) (Baker's yeast), this protein is Dolichyl-phosphate-mannose--protein mannosyltransferase 4.